The following is an 84-amino-acid chain: MSEFWLCFNCCIAEQPQPKRRRRIDRSMIGEPTNFVHTAHVGSGDLFSGMNSVSSIQNQMQSKGGYGGNMSANVQMQLVDTKAG.

Residues Cys-10 and Cys-11 are each lipidated (S-palmitoyl cysteine). The CRIB domain occupies 29–42; sequence IGEPTNFVHTAHVG.

It belongs to the CDC42SE/SPEC family.

Its subcellular location is the cytoplasm. The protein localises to the cytoskeleton. It localises to the cell membrane. Functionally, probably involved in the organization of the actin cytoskeleton by acting downstream of CDC42, inducing actin filament assembly. In Xenopus tropicalis (Western clawed frog), this protein is CDC42 small effector protein 2-A (cdc42se2-A).